The sequence spans 178 residues: Oligoribonuclease (178 aa).

An Exonuclease domain is found at 7–168 (LIWIDLEMTG…DDIRESIAEL (162 aa)). Residue Tyr128 is part of the active site.

Belongs to the oligoribonuclease family.

The protein localises to the cytoplasm. 3'-to-5' exoribonuclease specific for small oligoribonucleotides. The polypeptide is Oligoribonuclease (Pseudomonas syringae pv. tomato (strain ATCC BAA-871 / DC3000)).